Reading from the N-terminus, the 984-residue chain is Putative formate dehydrogenase SAB2186c (984 aa).

One can recognise a 2Fe-2S ferredoxin-type domain in the interval 3-79 (EHLVVTLDGK…PMTVNTVNND (77 aa)). Residues C37, C48, C51, and C63 each coordinate [2Fe-2S] cluster. The 4Fe-4S His(Cys)3-ligated-type domain occupies 79–119 (DVKDAQKEALDRILEKHMLYCTVCDYNNGDCEIHNTMDAWG). [4Fe-4S] cluster-binding residues include H95, C99, C102, C109, C147, C150, C153, C157, C190, C193, C196, C200, C264, C267, C271, and C299. 2 4Fe-4S ferredoxin-type domains span residues 138–165 (PFYRYDPNQCILCGRCVEACQDIEVNET) and 181–211 (NDVPINESSCVSCGQCATVCPCNAMMEVNME). The formate dehydrogenase stretch occupies residues 252 to 984 (MRKERIKKTK…YVFPGNQVDK (733 aa)). The 4Fe-4S Mo/W bis-MGD-type domain occupies 257-313 (IKKTKTVCTYCGVGCSFEVWTKDREILKVQPSHDSPANKIATCVKGKFSWGHINSDQ).

This sequence in the C-terminal section; belongs to the prokaryotic molybdopterin-containing oxidoreductase family. [2Fe-2S] cluster is required as a cofactor. The cofactor is [4Fe-4S] cluster. It depends on Mo-bis(molybdopterin guanine dinucleotide) as a cofactor.

It carries out the reaction formate + NAD(+) = CO2 + NADH. This chain is Putative formate dehydrogenase SAB2186c, found in Staphylococcus aureus (strain bovine RF122 / ET3-1).